A 602-amino-acid chain; its full sequence is tRNA uridine 5-carboxymethylaminomethyl modification enzyme MnmG (602 aa).

10-15 (GGGHAG) provides a ligand contact to FAD. Residues 217-242 (DPQPRGFTGRPGPRAAESPTWQTHTT) form a disordered region. 267–281 (GPRYCPSIEDKVVRF) is a binding site for NAD(+).

This sequence belongs to the MnmG family. Homodimer. Heterotetramer of two MnmE and two MnmG subunits. FAD is required as a cofactor.

The protein localises to the cytoplasm. Functionally, NAD-binding protein involved in the addition of a carboxymethylaminomethyl (cmnm) group at the wobble position (U34) of certain tRNAs, forming tRNA-cmnm(5)s(2)U34. The protein is tRNA uridine 5-carboxymethylaminomethyl modification enzyme MnmG of Deinococcus geothermalis (strain DSM 11300 / CIP 105573 / AG-3a).